A 211-amino-acid polypeptide reads, in one-letter code: Protoglabretal synthase MOI1 (211 aa).

5 consecutive transmembrane segments (helical) span residues 16–36 (ASLH…TWII), 50–70 (LICW…YYVF), 104–124 (VLGI…LAAY), 135–155 (IFQF…FLTA), and 179–199 (IWVI…HAIC). The EXPERA domain maps to 46-188 (IERLLICWWA…IWVIVPMLIA (143 aa)).

This sequence belongs to the EBP family. As to expression, expressed in maturing fruits and in juice vesicles.

It is found in the membrane. The enzyme catalyses 7,8-epoxymelianol = protoglabretal. The protein operates within secondary metabolite biosynthesis; terpenoid biosynthesis. Its function is as follows. Isomerase involved in the biosynthesis of glabretanes triterpene natural products such as glabretal, a component with in vitro antiproliferative properties on lymphocytes. Catalyzes the conversion of 7,8-epoxymelianol to protoglabretal via skeletal rearrangements. This chain is Protoglabretal synthase MOI1, found in Citrus sinensis (Sweet orange).